We begin with the raw amino-acid sequence, 260 residues long: Putative serine protease 45 (260 aa).

The Peptidase S1 domain maps to M1 to S234. C19 and C35 are joined by a disulfide. The Charge relay system role is filled by H34. N55 carries N-linked (GlcNAc...) asparagine glycosylation. Residue D82 is the Charge relay system of the active site. Intrachain disulfides connect C116/C192, C151/C173, and C182/C210. S186 (charge relay system) is an active-site residue.

The protein belongs to the peptidase S1 family.

This Homo sapiens (Human) protein is Putative serine protease 45.